The chain runs to 900 residues: Isoleucine--tRNA ligase (900 aa).

Residues Pro58–His68 carry the 'HIGH' region motif. Glu552 lines the L-isoleucyl-5'-AMP pocket. Positions Lys593–Ser597 match the 'KMSKS' region motif. An ATP-binding site is contributed by Lys596.

Belongs to the class-I aminoacyl-tRNA synthetase family. IleS type 1 subfamily. In terms of assembly, monomer.

It is found in the cytoplasm. The enzyme catalyses tRNA(Ile) + L-isoleucine + ATP = L-isoleucyl-tRNA(Ile) + AMP + diphosphate. Catalyzes the attachment of isoleucine to tRNA(Ile). As IleRS can inadvertently accommodate and process structurally similar amino acids such as valine, to avoid such errors it has two additional distinct tRNA(Ile)-dependent editing activities. One activity is designated as 'pretransfer' editing and involves the hydrolysis of activated Val-AMP. The other activity is designated 'posttransfer' editing and involves deacylation of mischarged Val-tRNA(Ile). The protein is Isoleucine--tRNA ligase of Ureaplasma parvum serovar 3 (strain ATCC 700970).